The chain runs to 151 residues: Small ribosomal subunit protein uS15 (151 aa).

This sequence belongs to the universal ribosomal protein uS15 family.

This is Small ribosomal subunit protein uS15 (RpS13) from Choristoneura parallela (Spotted fireworm moth).